A 254-amino-acid chain; its full sequence is Hydroxyacylglutathione hydrolase (254 aa).

Zn(2+) is bound by residues His-53, His-55, Asp-57, His-58, His-111, Asp-128, and His-166.

The protein belongs to the metallo-beta-lactamase superfamily. Glyoxalase II family. Monomer. Zn(2+) serves as cofactor.

It carries out the reaction an S-(2-hydroxyacyl)glutathione + H2O = a 2-hydroxy carboxylate + glutathione + H(+). Its pathway is secondary metabolite metabolism; methylglyoxal degradation; (R)-lactate from methylglyoxal: step 2/2. Thiolesterase that catalyzes the hydrolysis of S-D-lactoyl-glutathione to form glutathione and D-lactic acid. The chain is Hydroxyacylglutathione hydrolase from Aeromonas salmonicida (strain A449).